Consider the following 333-residue polypeptide: Holliday junction branch migration complex subunit RuvB (333 aa).

Residues 1–182 are large ATPase domain (RuvB-L); sequence MDERLLSQSH…FGVTLKLEYY (182 aa). Residues L21, R22, G63, K66, T67, T68, 129-131, R172, Y182, and R219 each bind ATP; that span reads EDY. Mg(2+) is bound at residue T67. The segment at 183 to 253 is small ATPAse domain (RuvB-S); it reads ETHELAAIVS…LASDALDRLH (71 aa). Positions 256-333 are head domain (RuvB-H); it reads ALGLDEVDHR…SHFGYEEEEE (78 aa). R311 and R316 together coordinate DNA.

The protein belongs to the RuvB family. Homohexamer. Forms an RuvA(8)-RuvB(12)-Holliday junction (HJ) complex. HJ DNA is sandwiched between 2 RuvA tetramers; dsDNA enters through RuvA and exits via RuvB. An RuvB hexamer assembles on each DNA strand where it exits the tetramer. Each RuvB hexamer is contacted by two RuvA subunits (via domain III) on 2 adjacent RuvB subunits; this complex drives branch migration. In the full resolvosome a probable DNA-RuvA(4)-RuvB(12)-RuvC(2) complex forms which resolves the HJ.

The protein resides in the cytoplasm. The enzyme catalyses ATP + H2O = ADP + phosphate + H(+). Functionally, the RuvA-RuvB-RuvC complex processes Holliday junction (HJ) DNA during genetic recombination and DNA repair, while the RuvA-RuvB complex plays an important role in the rescue of blocked DNA replication forks via replication fork reversal (RFR). RuvA specifically binds to HJ cruciform DNA, conferring on it an open structure. The RuvB hexamer acts as an ATP-dependent pump, pulling dsDNA into and through the RuvAB complex. RuvB forms 2 homohexamers on either side of HJ DNA bound by 1 or 2 RuvA tetramers; 4 subunits per hexamer contact DNA at a time. Coordinated motions by a converter formed by DNA-disengaged RuvB subunits stimulates ATP hydrolysis and nucleotide exchange. Immobilization of the converter enables RuvB to convert the ATP-contained energy into a lever motion, pulling 2 nucleotides of DNA out of the RuvA tetramer per ATP hydrolyzed, thus driving DNA branch migration. The RuvB motors rotate together with the DNA substrate, which together with the progressing nucleotide cycle form the mechanistic basis for DNA recombination by continuous HJ branch migration. Branch migration allows RuvC to scan DNA until it finds its consensus sequence, where it cleaves and resolves cruciform DNA. In Exiguobacterium sp. (strain ATCC BAA-1283 / AT1b), this protein is Holliday junction branch migration complex subunit RuvB.